The following is a 159-amino-acid chain: Protein-export protein SecB (159 aa).

It belongs to the SecB family. Homotetramer, a dimer of dimers. One homotetramer interacts with 1 SecA dimer.

The protein resides in the cytoplasm. In terms of biological role, one of the proteins required for the normal export of preproteins out of the cell cytoplasm. It is a molecular chaperone that binds to a subset of precursor proteins, maintaining them in a translocation-competent state. It also specifically binds to its receptor SecA. The sequence is that of Protein-export protein SecB from Shewanella amazonensis (strain ATCC BAA-1098 / SB2B).